Here is a 264-residue protein sequence, read N- to C-terminus: Interleukin-33 (264 aa).

A homeodomain-like HTH domain region spans residues 1–67 (MRPRMKYSNS…ETCYFGKEPA (67 aa)). The propeptide occupies 1-101 (MRPRMKYSNS…RSLLGSIQAF (101 aa)). The interval 66-108 (PAKRYSLKSGSKHEGRLSTCLPDSRKRSLLGSIQAFAASVDTL) is interaction with RELA.

It belongs to the IL-1 family. Highly divergent. In terms of assembly, forms a 1:1:1 heterotrimeric complex with its primary high-affinity receptor IL1RL1 and the coreceptor IL1RAP. Interacts with cargo receptor TMED10; the interaction mediates the translocation from the cytoplasm into the ERGIC (endoplasmic reticulum-Golgi intermediate compartment) and thereby secretion. Post-translationally, the full-length protein can be released from cells and is able to signal via the IL1RL1/ST2 receptor. However, proteolytic processing by CELA1, CSTG/cathepsin G and ELANE/neutrophil elastase produces C-terminal peptides that are more active than the unprocessed full-length protein. May also be proteolytically processed by calpains. Proteolytic cleavage mediated by apoptotic caspases including CASP3 and CASP7 results in IL33 inactivation. In vitro proteolytic cleavage by CASP1 was reported but could not be confirmed in vivo suggesting that IL33 is probably not a direct substrate for that caspase.

The protein localises to the nucleus. It localises to the chromosome. The protein resides in the cytoplasm. It is found in the cytoplasmic vesicle. Its subcellular location is the secretory vesicle. The protein localises to the secreted. Cytokine that binds to and signals through the IL1RL1/ST2 receptor which in turn activates NF-kappa-B and MAPK signaling pathways in target cells. Involved in the maturation of Th2 cells inducing the secretion of T-helper type 2-associated cytokines. Also involved in activation of mast cells, basophils, eosinophils and natural killer cells. Acts as a chemoattractant for Th2 cells, and may function as an 'alarmin', that amplifies immune responses during tissue injury. Induces rapid UCP2-dependent mitochondrial rewiring that attenuates the generation of reactive oxygen species and preserves the integrity of Krebs cycle required for persistent production of itaconate and subsequent GATA3-dependent differentiation of inflammation-resolving alternatively activated macrophages. Functionally, in quiescent endothelia the uncleaved form is constitutively and abundantly expressed, and acts as a chromatin-associated nuclear factor with transcriptional repressor properties, it may sequester nuclear NF-kappaB/RELA, lowering expression of its targets. This form is rapidely lost upon angiogenic or pro-inflammatory activation. This Rattus norvegicus (Rat) protein is Interleukin-33.